A 465-amino-acid chain; its full sequence is Cysteine--tRNA ligase (465 aa).

C27 lines the Zn(2+) pocket. A 'HIGH' region motif is present at residues 29-39 (PTVYDDAHLGH). Zn(2+) contacts are provided by C207, H237, and E241. The 'KMSKS' region signature appears at 269–273 (KMSKS). K272 is a binding site for ATP.

Belongs to the class-I aminoacyl-tRNA synthetase family. Monomer. It depends on Zn(2+) as a cofactor.

The protein resides in the cytoplasm. It catalyses the reaction tRNA(Cys) + L-cysteine + ATP = L-cysteinyl-tRNA(Cys) + AMP + diphosphate. The sequence is that of Cysteine--tRNA ligase from Helicobacter pylori (strain Shi470).